The sequence spans 225 residues: Membrane protein (225 aa).

Over 1 to 20 the chain is Virion surface; the sequence is MPNETNCTLDFEQSVQLFKE. The chain crosses the membrane as a helical span at residues 21 to 41; sequence YNLFITAFLLFLTIILQYGYA. Residues 42–51 lie on the Intravirion side of the membrane; it reads TRTKVIYTLK. Residues 52–72 traverse the membrane as a helical segment; that stretch reads MIVLWCFWPLNIAVGVISCTY. The Virion surface segment spans residues 73–77; it reads PPNTG. A helical transmembrane segment spans residues 78-98; the sequence is GLVVAIILTVFACLSFVGYWI. At 99–225 the chain is on the intravirion side; the sequence is QSIRLFKRCR…VATGGSSLYT (127 aa).

The protein belongs to the gammacoronaviruses M protein family. In terms of assembly, homomultimer. Interacts with envelope E protein in the budding compartment of the host cell, which is located between endoplasmic reticulum and the Golgi complex. Forms a complex with HE and S proteins. Interacts with nucleocapsid N protein. This interaction probably participates in RNA packaging into the virus.

Its subcellular location is the virion membrane. The protein localises to the host Golgi apparatus membrane. In terms of biological role, component of the viral envelope that plays a central role in virus morphogenesis and assembly via its interactions with other viral proteins. This Avian infectious bronchitis virus (strain Beaudette US) (IBV) protein is Membrane protein.